The following is a 214-amino-acid chain: Neuromodulin (214 aa).

The tract at residues 1 to 214 (MLCCMRRTKQ…EEAKPDQENA (214 aa)) is disordered. 2 S-palmitoyl cysteine lipidation sites follow: Cys-3 and Cys-4. 3 stretches are compositionally biased toward basic and acidic residues: residues 9–33 (KQVEKNEDGDQKIDQDGNKPEDKAH), 52–88 (MKDDKKDDNSEEAVENHKGEAKDEAATTENKTPKTEE), and 95–122 (LEVKKEAISSPAEDKKQEPSSEKPKDTP). One can recognise an IQ domain in the interval 32–61 (AHKAATKIQASFRGHIIRKKMKDDKKDDNS). Low complexity predominate over residues 124–133 (EENQASAESE). Basic and acidic residues-rich tracts occupy residues 150-160 (QAKEESKKADV), 168-193 (ASEKEQEKAESSQEDVKKDEVEEIKA), and 205-214 (EEAKPDQENA).

This sequence belongs to the neuromodulin family. As to quaternary structure, binds calmodulin with a greater affinity in the absence of Ca(2+) than in its presence. Post-translationally, palmitoylated. Palmitoylation is essential for plasma membrane association.

It is found in the cell membrane. The protein resides in the cell projection. It localises to the growth cone membrane. Its subcellular location is the synapse. The protein localises to the filopodium membrane. Its function is as follows. This protein is associated with nerve growth. It is a major component of the motile 'growth cones' that form the tips of elongating axons. Plays a role in axonal and dendritic filopodia induction. This is Neuromodulin (gap43) from Xenopus laevis (African clawed frog).